A 253-amino-acid polypeptide reads, in one-letter code: Indole-3-glycerol phosphate synthase (253 aa).

The protein belongs to the TrpC family.

The enzyme catalyses 1-(2-carboxyphenylamino)-1-deoxy-D-ribulose 5-phosphate + H(+) = (1S,2R)-1-C-(indol-3-yl)glycerol 3-phosphate + CO2 + H2O. Its pathway is amino-acid biosynthesis; L-tryptophan biosynthesis; L-tryptophan from chorismate: step 4/5. The sequence is that of Indole-3-glycerol phosphate synthase from Bacillus mycoides (strain KBAB4) (Bacillus weihenstephanensis).